Reading from the N-terminus, the 74-residue chain is Beta-defensin 39 (74 aa).

The signal sequence occupies residues 1–23 (MKISYFLLLILSLGSSQINPVSG). Intrachain disulfides connect Cys-29–Cys-58, Cys-36–Cys-51, and Cys-41–Cys-59.

This sequence belongs to the beta-defensin family. In terms of tissue distribution, only expressed in epididymis (caput, corpus and cauda).

The protein localises to the secreted. Functionally, has antibacterial activity. The chain is Beta-defensin 39 (Defb39) from Mus musculus (Mouse).